The sequence spans 205 residues: High frequency lysogenization protein HflD homolog (205 aa).

This sequence belongs to the HflD family.

It localises to the cytoplasm. The protein localises to the cell inner membrane. This is High frequency lysogenization protein HflD homolog from Shewanella oneidensis (strain ATCC 700550 / JCM 31522 / CIP 106686 / LMG 19005 / NCIMB 14063 / MR-1).